The chain runs to 496 residues: NADH-quinone oxidoreductase subunit N (496 aa).

14 helical membrane passes run 8 to 28 (LLSTEIIMAVLGLGLFAVGLI), 37 to 57 (MFPLTLFALLGTLAYAVYDFF), 73 to 93 (QFAGFFKILFLVAALLVVLST), 110 to 130 (LLLLAALGMMLMAGAGDLLTM), 131 to 151 (YVGLELMTITFYILVAYHPND), 162 to 182 (LVLGAASSAVLLYGISLIYGL), 203 to 223 (TILATVMMLAGFGFKISLVPF), 235 to 255 (PAPITAFLATASKAAGFAALV), 271 to 291 (GLILLLVLAAITMIIGNLMAF), 300 to 320 (MAYSGIAQAGYIIVGVIAVSI), 341 to 361 (GVLFYLMIYVFANLGAFAVIT), 386 to 406 (AAVLTLSVLSLAGIPPLAGFV), 421 to 441 (VWIAVIGFVMSMISVYYYLSI), and 464 to 484 (FGMIFSMIVTIVLGIYPTPLA).

Belongs to the complex I subunit 2 family. As to quaternary structure, NDH-1 is composed of 14 different subunits. Subunits NuoA, H, J, K, L, M, N constitute the membrane sector of the complex.

The protein resides in the cell membrane. It catalyses the reaction a quinone + NADH + 5 H(+)(in) = a quinol + NAD(+) + 4 H(+)(out). Functionally, NDH-1 shuttles electrons from NADH, via FMN and iron-sulfur (Fe-S) centers, to quinones in the respiratory chain. The immediate electron acceptor for the enzyme in this species is believed to be a menaquinone. Couples the redox reaction to proton translocation (for every two electrons transferred, four hydrogen ions are translocated across the cytoplasmic membrane), and thus conserves the redox energy in a proton gradient. In Desulfitobacterium hafniense (strain DSM 10664 / DCB-2), this protein is NADH-quinone oxidoreductase subunit N.